Reading from the N-terminus, the 21-residue chain is Natriuretic peptide TsNP (21 aa).

An intrachain disulfide couples Cys-5 to Cys-21.

Expressed by the venom gland.

Its subcellular location is the secreted. Functionally, scorpion venom natriuretic peptide that increases the perfusion pressure, glomerular filtration rate and urinary flow in the isolated perfused rat kidney assay. Induces a decrease of the percentages of renal transport for sodium, potassium and chloride and an increase of the urinary cGMP concentration. Also down-regulates the mRNA expression of natriuretic peptide receptor 1 (NPR1) in the kidneys whereas it up-regulates those of NPR2, NPR3 and guanylyl cyclase C (GUCY2C) mRNAs. May exhibit hypotensive and vasodepressor activities. In Tityus serrulatus (Brazilian scorpion), this protein is Natriuretic peptide TsNP.